The following is a 330-amino-acid chain: Serine/threonine-protein phosphatase PP1-alpha catalytic subunit (330 aa).

Position 2 is an N-acetylserine (Ser2). Phosphoserine is present on residues Ser2 and Ser22. The Mn(2+) site is built by Asp64, His66, Asp92, and Asn124. The active-site Proton donor is the His125. Mn(2+) is bound by residues His173 and His248. Lys305 carries the N6-acetyllysine modification. Tyr306 bears the Phosphotyrosine mark. Residues 306–330 (YGQFSGLNPGGRPITPPRNSAKAKK) form a disordered region. The residue at position 320 (Thr320) is a Phosphothreonine. The residue at position 325 (Ser325) is a Phosphoserine.

The protein belongs to the PPP phosphatase family. PP-1 subfamily. As to quaternary structure, PP1 comprises a catalytic subunit, PPP1CA, PPP1CB or PPP1CC, which is folded into its native form by inhibitor 2 and glycogen synthetase kinase 3, and then complexed to one or several targeting or regulatory subunits. PPP1R12A, PPP1R12B and PPP1R12C mediate binding to myosin. PPP1R3A (in skeletal muscle), PPP1R3B (in liver), PPP1R3C, PPP1R3D and PPP1R3F (in brain) mediate binding to glycogen. Interacts with PPP1R15A and PPP1R15B; the interactions mediate binding to EIF2S1. Part of a complex containing PPP1R15B, PP1 and NCK1/2. Interacts with PPP1R9A, PPP1R9B and PPP1R7. Interacts with YLPM1. Forms a complex with ILF2, ILF3, YLPM1, KHDRBS1, RBMX and NCOA5. Interacts with NOM1 and PPP1R8. Interacts with PPP1R16B. Interacts with RPSA only in the presence of PPP1R16B. Component of the PNUTS-PP1 phosphatase complex, composed of PPP1R10/PNUTS, TOX4, WDR82, and PPP1CA or PPP1CB or PPP1CC. Interacts with PPP1R10/PNUTS and PPP1R8. Interacts with WDR82 in the presence of PPP1R10/PNUTS. Interacts with PPP1R39. transition from mitosis into interphase. Interacts with TRIM28; the interaction dephosphorylates TRIM28 on 'Ser-824' and forms a complex at the p21 promoter site. Interacts with NEK2. Interacts with PHACTR4; which acts as an activator of PP1 activity. Interacts with FER; this promotes phosphorylation at Thr-320. Interacts with BTBD10. Interacts with KCTD20. Interacts with FOXP3. Interacts with CENPA. Interacts with ATG16L1. Found in a complex with PPP1CA, PPP1CC, SHC1 and PEAK1. Interacts with tensin TNS1. Interacts with SAXO4, PPP1R21, PPP1R26, PPP1R27, PPP1R35, PPP1R36, PPP1R37, SH3RF2, ELFN1 and ELFN2. Interacts with TPRN; the interaction results in inhibition of PPC1A phosphatase activity. Interacts with SKA1 (via C-terminus); the interaction is direct and required for the recruitment of PP1 to the kinetochore. Interacts with the KNL1 complex subunit KNL1; the interaction is direct and mutually exclusive with KNL1 binding to microtubules. Component of the SHOC2-MRAS-PP1c (SMP) complex consisting of SHOC2, GTP-bound M-Ras/MRAS and the catalytic subunit of protein phosphatase 1 (either PPP1CA, PPP1CB or PPP1CC). SHOC2 and PP1c preferably bind M-Ras/MRAS, but they also bind K-Ras/KRAS, N-Ras/NRAS and H-Ras/HRAS; these interactions are GTP-dependent and both SHOC2 and PP1c are required to form a stable complex. Interacts with SHOC2 in the absence of Ras GTPases. The cofactor is Mn(2+). In terms of processing, phosphorylated. Dephosphorylated at Thr-320 in the presence of ionizing radiation.

Its subcellular location is the cytoplasm. The protein resides in the nucleus. It is found in the nucleoplasm. The protein localises to the nucleolus. It catalyses the reaction O-phospho-L-seryl-[protein] + H2O = L-seryl-[protein] + phosphate. The enzyme catalyses O-phospho-L-threonyl-[protein] + H2O = L-threonyl-[protein] + phosphate. Its function is as follows. Protein phosphatase that associates with over 200 regulatory proteins to form highly specific holoenzymes which dephosphorylate hundreds of biological targets. Protein phosphatase 1 (PP1) is essential for cell division, transcription elongation, and participates in the regulation of glycogen metabolism, muscle contractility and protein synthesis. Involved in regulation of ionic conductances and long-term synaptic plasticity. May play an important role in dephosphorylating substrates such as the postsynaptic density-associated Ca(2+)/calmodulin dependent protein kinase II. Catalytic component of the PNUTS-PP1 protein phosphatase complex, a protein phosphatase 1 (PP1) complex that promotes RNA polymerase II transcription pause-release, allowing transcription elongation: the PNUTS-PP1 complex mediates the release of RNA polymerase II from promoter-proximal region of genes by catalyzing dephosphorylation of proteins involved in transcription, such as AFF4, CDK9, MEPCE, INTS12, NCBP1, POLR2M/GDOWN1 and SUPT6H. The PNUTS-PP1 complex also regulates transcription termination by mediating dephosphorylation of SUPT5H in termination zones downstream of poly(A) sites, thereby promoting deceleration of RNA polymerase II transcription. PNUTS-PP1 complex is also involved in the response to replication stress by mediating dephosphorylation of POLR2A at 'Ser-5' of the CTD, promoting RNA polymerase II degradation. PNUTS-PP1 also plays a role in the control of chromatin structure and cell cycle progression during the transition from mitosis into interphase. Regulates NEK2 function in terms of kinase activity and centrosome number and splitting, both in the presence and absence of radiation-induced DNA damage. Regulator of neural tube and optic fissure closure, and enteric neural crest cell (ENCCs) migration during development. In balance with CSNK1D and CSNK1E, determines the circadian period length, through the regulation of the speed and rhythmicity of PER1 and PER2 phosphorylation. May dephosphorylate CSNK1D and CSNK1E. Dephosphorylates the 'Ser-418' residue of FOXP3 in regulatory T-cells (Treg) from patients with rheumatoid arthritis, thereby inactivating FOXP3 and rendering Treg cells functionally defective. Dephosphorylates CENPA. Dephosphorylates the 'Ser-139' residue of ATG16L1 causing dissociation of ATG12-ATG5-ATG16L1 complex, thereby inhibiting autophagy. Together with PPP1CC (PP1-gamma subunit), dephosphorylates IFIH1/MDA5 and RIG-I leading to their activation and a functional innate immune response. Core component of the SHOC2-MRAS-PP1c (SMP) holophosphatase complex that regulates the MAPK pathway activation. The SMP complex specifically dephosphorylates the inhibitory phosphorylation at 'Ser-259' of RAF1 kinase, 'Ser-365' of BRAF kinase and 'Ser-214' of ARAF kinase, stimulating their kinase activities. The SMP complex enhances the dephosphorylation activity and substrate specificity of PP1c. The sequence is that of Serine/threonine-protein phosphatase PP1-alpha catalytic subunit (PPP1CA) from Canis lupus familiaris (Dog).